We begin with the raw amino-acid sequence, 235 residues long: Small ribosomal subunit protein uS3 (235 aa).

A KH type-2 domain is found at 39 to 107 (VRLFLRKELF…PTQINIAEIR (69 aa)).

It belongs to the universal ribosomal protein uS3 family. In terms of assembly, part of the 30S ribosomal subunit. Forms a tight complex with proteins S10 and S14.

Functionally, binds the lower part of the 30S subunit head. Binds mRNA in the 70S ribosome, positioning it for translation. In Buchnera aphidicola subsp. Baizongia pistaciae (strain Bp), this protein is Small ribosomal subunit protein uS3.